Here is a 223-residue protein sequence, read N- to C-terminus: Ribonuclease S-2 (223 aa).

A signal peptide spans 1–22 (MAKSQLVSALFVFFFSLSPIYG). The cysteines at positions 38 and 44 are disulfide-linked. An N-linked (GlcNAc...) asparagine glycan is attached at N51. H55 functions as the Proton donor in the catalytic mechanism. RNA-binding positions include H55 and 94–95 (QL). Disulfide bonds link C71–C119, C178–C211, and C194–C205. Q112 is an active-site residue. 115 to 116 (KH) contacts RNA. Catalysis depends on H116, which acts as the Proton acceptor.

It belongs to the RNase T2 family. In terms of tissue distribution, pistil.

The protein resides in the secreted. Its subcellular location is the extracellular space. The enzyme catalyses a ribonucleotidyl-ribonucleotide-RNA + H2O = a 3'-end 3'-phospho-ribonucleotide-RNA + a 5'-end dephospho-ribonucleoside-RNA + H(+). Self-incompatibility (SI) is the inherited ability of a flowering plant to prevent self-fertilization by discriminating between self and non-self pollen during pollination. In many species of the Solanaceae, self-incompatibility is controlled by the single, multiallelic locus S. This stylar glycoprotein is associated with expression of self-incompatibility in potato. This Solanum tuberosum (Potato) protein is Ribonuclease S-2.